Here is a 131-residue protein sequence, read N- to C-terminus: Glycine cleavage system H protein (131 aa).

Residues 24-106 enclose the Lipoyl-binding domain; it reads TVRVGITDYA…YGEGWLVDLR (83 aa). Lys-65 is subject to N6-lipoyllysine.

It belongs to the GcvH family. In terms of assembly, the glycine cleavage system is composed of four proteins: P, T, L and H. The cofactor is (R)-lipoate.

Functionally, the glycine cleavage system catalyzes the degradation of glycine. The H protein shuttles the methylamine group of glycine from the P protein to the T protein. In Mycolicibacterium smegmatis (strain ATCC 700084 / mc(2)155) (Mycobacterium smegmatis), this protein is Glycine cleavage system H protein.